Reading from the N-terminus, the 280-residue chain is Eukaryotic translation initiation factor 3 subunit F-1 (280 aa).

An MPN domain is found at 8-138; the sequence is VRVHPVVLFQ…LRAYVCIQLG (131 aa).

Belongs to the eIF-3 subunit F family. Component of the eukaryotic translation initiation factor 3 (eIF-3) complex. The eIF-3 complex interacts with pix.

It localises to the cytoplasm. Its function is as follows. Component of the eukaryotic translation initiation factor 3 (eIF-3) complex, which is involved in protein synthesis of a specialized repertoire of mRNAs and, together with other initiation factors, stimulates binding of mRNA and methionyl-tRNAi to the 40S ribosome. The eIF-3 complex specifically targets and initiates translation of a subset of mRNAs involved in cell proliferation. The protein is Eukaryotic translation initiation factor 3 subunit F-1 of Drosophila erecta (Fruit fly).